The following is a 69-amino-acid chain: Toxin Lc a (69 aa).

4 cysteine pairs are disulfide-bonded: Cys3–Cys20, Cys13–Cys41, Cys45–Cys56, and Cys57–Cys62.

The protein belongs to the three-finger toxin family. Long-chain subfamily. Type II alpha-neurotoxin sub-subfamily. As to expression, expressed by the venom gland.

It localises to the secreted. Functionally, binds with high affinity to muscular nicotinic acetylcholine receptors (nAChRs), whereas it binds with a low affinity to neuronal alpha-7/CHRNA7 nAChRs. In Laticauda colubrina (Yellow-lipped sea krait), this protein is Toxin Lc a.